A 281-amino-acid polypeptide reads, in one-letter code: Ribosomal RNA large subunit methyltransferase J (281 aa).

S-adenosyl-L-methionine is bound by residues H19, H42, S101, E119, 144–145 (NG), and D165. D165 acts as the Proton acceptor in catalysis.

It belongs to the RlmJ family. In terms of assembly, monomer.

The catalysed reaction is adenosine(2030) in 23S rRNA + S-adenosyl-L-methionine = N(6)-methyladenosine(2030) in 23S rRNA + S-adenosyl-L-homocysteine + H(+). Its function is as follows. Specifically methylates the adenine in position 2030 of 23S rRNA. In Haemophilus influenzae (strain ATCC 51907 / DSM 11121 / KW20 / Rd), this protein is Ribosomal RNA large subunit methyltransferase J.